The chain runs to 368 residues: Isopentenyl-diphosphate delta-isomerase (368 aa).

7–8 (RK) provides a ligand contact to substrate. FMN contacts are provided by residues threonine 65, 66–68 (GMT), serine 96, and asparagine 125. 96–98 (SQR) provides a ligand contact to substrate. Residue glutamine 160 coordinates substrate. Glutamate 161 is a binding site for Mg(2+). FMN is bound by residues lysine 193, serine 218, threonine 223, 275-277 (GIR), and 296-297 (AL).

This sequence belongs to the IPP isomerase type 2 family. As to quaternary structure, homooctamer. Dimer of tetramers. It depends on FMN as a cofactor. NADPH serves as cofactor. The cofactor is Mg(2+).

Its subcellular location is the cytoplasm. The enzyme catalyses isopentenyl diphosphate = dimethylallyl diphosphate. Involved in the biosynthesis of isoprenoids. Catalyzes the 1,3-allylic rearrangement of the homoallylic substrate isopentenyl (IPP) to its allylic isomer, dimethylallyl diphosphate (DMAPP). The polypeptide is Isopentenyl-diphosphate delta-isomerase (Saccharolobus shibatae (strain ATCC 51178 / DSM 5389 / JCM 8931 / NBRC 15437 / B12) (Sulfolobus shibatae)).